A 285-amino-acid polypeptide reads, in one-letter code: Cytosolic Fe-S cluster assembly factor CFD1 (285 aa).

30-37 lines the ATP pocket; it reads GKGGVGKS. Residues Cys-206 and Cys-209 each contribute to the [4Fe-4S] cluster site.

The protein belongs to the Mrp/NBP35 ATP-binding proteins family. NUBP2/CFD1 subfamily. Heterotetramer of 2 NBP35 and 2 CFD1 chains. [4Fe-4S] cluster is required as a cofactor.

It is found in the cytoplasm. In terms of biological role, component of the cytosolic iron-sulfur (Fe/S) protein assembly (CIA) machinery. Required for maturation of extramitochondrial Fe-S proteins. The NBP35-CFD1 heterotetramer forms a Fe-S scaffold complex, mediating the de novo assembly of an Fe-S cluster and its transfer to target apoproteins. Required for biogenesis and export of both ribosomal subunits, which may reflect a role in assembly of the Fe/S clusters in RLI1, a protein which performs rRNA processing and ribosome export. The chain is Cytosolic Fe-S cluster assembly factor CFD1 from Candida glabrata (strain ATCC 2001 / BCRC 20586 / JCM 3761 / NBRC 0622 / NRRL Y-65 / CBS 138) (Yeast).